Here is a 301-residue protein sequence, read N- to C-terminus: NAD kinase 2 (301 aa).

D77 serves as the catalytic Proton acceptor. NAD(+) contacts are provided by residues 77–78 (DG), R82, 151–152 (NE), K162, D181, and 192–197 (TAYAFS).

The protein belongs to the NAD kinase family. The cofactor is a divalent metal cation.

The protein resides in the cytoplasm. The enzyme catalyses NAD(+) + ATP = ADP + NADP(+) + H(+). Functionally, involved in the regulation of the intracellular balance of NAD and NADP, and is a key enzyme in the biosynthesis of NADP. Catalyzes specifically the phosphorylation on 2'-hydroxyl of the adenosine moiety of NAD to yield NADP. The sequence is that of NAD kinase 2 from Streptomyces coelicolor (strain ATCC BAA-471 / A3(2) / M145).